A 312-amino-acid chain; its full sequence is Ribosomal protein L11 methyltransferase (312 aa).

Residues Thr-160, Gly-181, Asp-203, and Asn-246 each coordinate S-adenosyl-L-methionine.

Belongs to the methyltransferase superfamily. PrmA family.

Its subcellular location is the cytoplasm. The catalysed reaction is L-lysyl-[protein] + 3 S-adenosyl-L-methionine = N(6),N(6),N(6)-trimethyl-L-lysyl-[protein] + 3 S-adenosyl-L-homocysteine + 3 H(+). Methylates ribosomal protein L11. In Staphylococcus aureus (strain bovine RF122 / ET3-1), this protein is Ribosomal protein L11 methyltransferase.